The following is a 423-amino-acid chain: UPF0229 protein PLES_05841 (423 aa).

Positions 84 to 107 are disordered; sequence AGEHIARPSGGGGGRGGGKASNSG. A compositionally biased stretch (gly residues) spans 92–102; that stretch reads SGGGGGRGGGK.

Belongs to the UPF0229 family.

The protein is UPF0229 protein PLES_05841 of Pseudomonas aeruginosa (strain LESB58).